The sequence spans 262 residues: Catechol O-methyltransferase domain-containing protein 1 (262 aa).

Residues 12–32 traverse the membrane as a helical; Signal-anchor for type II membrane protein segment; the sequence is AALALGSAALGAAFATGLFLG. Residues aspartate 108, 110–111, serine 116, glutamate 134, valine 135, alanine 163, aspartate 185, aspartate 187, and tyrosine 194 each bind S-adenosyl-L-methionine; that span reads GT.

The protein belongs to the class I-like SAM-binding methyltransferase superfamily. Cation-dependent O-methyltransferase family. In terms of assembly, homodimer.

The protein resides in the membrane. In terms of biological role, putative O-methyltransferase. This chain is Catechol O-methyltransferase domain-containing protein 1 (COMTD1), found in Homo sapiens (Human).